Here is a 499-residue protein sequence, read N- to C-terminus: Probable alpha-L-arabinofuranosidase B (499 aa).

The signal sequence occupies residues 1–17 (MFSRRNLLALGLAATVS). The catalytic stretch occupies residues 18–335 (AGPCDIYEAG…ENIVAAKYVV (318 aa)). 3 disulfides stabilise this stretch: Cys-21/Cys-31, Cys-81/Cys-86, and Cys-176/Cys-177. N-linked (GlcNAc...) asparagine glycosylation occurs at Asn-83. Asn-202 carries an N-linked (GlcNAc...) asparagine glycan. Position 219 (Asp-219) interacts with substrate. The Nucleophile role is filled by Glu-221. Residues Asn-222, Asn-223, Gly-296, His-416, Asn-418, Phe-419, Asp-435, His-463, Glu-465, Leu-468, and Asp-488 each coordinate substrate. Residues 336–499 (GSLVSGPSFT…SFEIETAFAS (164 aa)) form an ABD region. A disulfide bond links Cys-401 and Cys-439.

This sequence belongs to the glycosyl hydrolase 54 family.

Its subcellular location is the secreted. The catalysed reaction is Hydrolysis of terminal non-reducing alpha-L-arabinofuranoside residues in alpha-L-arabinosides.. Its pathway is glycan metabolism; L-arabinan degradation. Alpha-L-arabinofuranosidase involved in the degradation of arabinoxylan, a major component of plant hemicellulose. Able to hydrolyze 1,5-, 1,3- and 1,2-alpha-linkages not only in L-arabinofuranosyl oligosaccharides, but also in polysaccharides containing terminal non-reducing L-arabinofuranoses in side chains, like L-arabinan, arabinogalactan and arabinoxylan. This chain is Probable alpha-L-arabinofuranosidase B (abfB), found in Aspergillus awamori (Black koji mold).